Here is a 440-residue protein sequence, read N- to C-terminus: MTFFNDVEKVQYEGPRSTNPYAFKYYNPEEIVAGKTMAEHLRFSIAYWHTFVGDGSDPFGVGTMQRPWDQYSGMDLAKARVEAAFEFFEKLNVPYFCFHDVDVAPEGETLADTYKNLDEIVLMIKDYMKTSKTKLLWNTANMFTHPRWIHGAATSPNADVYAYAAAKVKKGLEIGKELGAENYVFWGGREGYETLLNTNMKLELDNLARFFHMAVDYAKEIGFDAQFLIEPKPKEPTKHQYDFDVATGIAFLKTHGLDEHFKFNIEANHATLAGHTFEHELHLARIHDMLGSVDANQGDTLLGWDTDEFPTDLYTTTLAMYEILKNDGLGKGGLNFDAKVRRGSFEANDLFHAHIAGMDSFAIGLKVANQLLEDRVLEDVIDNRYKSYQSGIGQKIANNDTNLKELEAYALSLGEIKHSSGQQERIKATLNQYLLRVNEY.

Active-site residues include histidine 99 and aspartate 102. 7 residues coordinate Mg(2+): glutamate 230, glutamate 266, histidine 269, aspartate 294, aspartate 305, aspartate 307, and aspartate 337.

It belongs to the xylose isomerase family. Homotetramer. Mg(2+) is required as a cofactor.

The protein resides in the cytoplasm. The catalysed reaction is alpha-D-xylose = alpha-D-xylulofuranose. In Halalkalibacterium halodurans (strain ATCC BAA-125 / DSM 18197 / FERM 7344 / JCM 9153 / C-125) (Bacillus halodurans), this protein is Xylose isomerase.